The primary structure comprises 418 residues: Putative methylthiotransferase jhp_0270 (418 aa).

One can recognise an MTTase N-terminal domain in the interval 2 to 110 (KKVYFKTFGC…INALLQEKKR (109 aa)). [4Fe-4S] cluster contacts are provided by cysteine 11, cysteine 45, cysteine 74, cysteine 144, cysteine 148, and cysteine 151. The 226-residue stretch at 130-355 (FVGKTRAFIK…KDLIFHKNKA (226 aa)) folds into the Radical SAM core domain.

The protein belongs to the methylthiotransferase family. It depends on [4Fe-4S] cluster as a cofactor.

The polypeptide is Putative methylthiotransferase jhp_0270 (Helicobacter pylori (strain J99 / ATCC 700824) (Campylobacter pylori J99)).